We begin with the raw amino-acid sequence, 530 residues long: Probable glycerol-3-phosphate acyltransferase 2 (530 aa).

A run of 3 helical transmembrane segments spans residues 70–90, 93–113, and 275–295; these read YFMV…LLVL, FISL…SFFG, and LVLF…LVFG. Residues 339-344 carry the HXXXXD motif motif; the sequence is HRTLLD.

This sequence belongs to the GPAT/DAPAT family. In terms of tissue distribution, weakly or not expressed in roots, leaves, seedlings, developing siliques and flower buds.

It localises to the membrane. It catalyses the reaction sn-glycerol 3-phosphate + an acyl-CoA = a 1-acyl-sn-glycero-3-phosphate + CoA. The protein operates within phospholipid metabolism; CDP-diacylglycerol biosynthesis; CDP-diacylglycerol from sn-glycerol 3-phosphate: step 1/3. In terms of biological role, esterifies acyl-group from acyl-ACP to the sn-1 position of glycerol-3-phosphate, an essential step in glycerolipid biosynthesis. The polypeptide is Probable glycerol-3-phosphate acyltransferase 2 (GPAT2) (Arabidopsis thaliana (Mouse-ear cress)).